A 495-amino-acid chain; its full sequence is Probable cytosol aminopeptidase (495 aa).

Lys-266 and Asp-271 together coordinate Mn(2+). The active site involves Lys-278. Residues Asp-289, Asp-348, and Glu-350 each coordinate Mn(2+). Arg-352 is a catalytic residue.

The protein belongs to the peptidase M17 family. Mn(2+) serves as cofactor.

Its subcellular location is the cytoplasm. The catalysed reaction is Release of an N-terminal amino acid, Xaa-|-Yaa-, in which Xaa is preferably Leu, but may be other amino acids including Pro although not Arg or Lys, and Yaa may be Pro. Amino acid amides and methyl esters are also readily hydrolyzed, but rates on arylamides are exceedingly low.. It catalyses the reaction Release of an N-terminal amino acid, preferentially leucine, but not glutamic or aspartic acids.. Its function is as follows. Presumably involved in the processing and regular turnover of intracellular proteins. Catalyzes the removal of unsubstituted N-terminal amino acids from various peptides. The sequence is that of Probable cytosol aminopeptidase from Pseudomonas aeruginosa (strain LESB58).